The primary structure comprises 281 residues: DegV domain-containing protein DR_1986 (281 aa).

Residues 3–278 (IAIVTDSTSD…PGAVGVALEP (276 aa)) form the DegV domain. Hexadecanoate contacts are provided by threonine 61 and serine 93.

Its function is as follows. May bind long-chain fatty acids, such as palmitate, and may play a role in lipid transport or fatty acid metabolism. This is DegV domain-containing protein DR_1986 from Deinococcus radiodurans (strain ATCC 13939 / DSM 20539 / JCM 16871 / CCUG 27074 / LMG 4051 / NBRC 15346 / NCIMB 9279 / VKM B-1422 / R1).